We begin with the raw amino-acid sequence, 323 residues long: Tetraacyldisaccharide 4'-kinase (323 aa).

56–63 (TVGGVGKT) contacts ATP.

The protein belongs to the LpxK family.

The enzyme catalyses a lipid A disaccharide + ATP = a lipid IVA + ADP + H(+). Its pathway is glycolipid biosynthesis; lipid IV(A) biosynthesis; lipid IV(A) from (3R)-3-hydroxytetradecanoyl-[acyl-carrier-protein] and UDP-N-acetyl-alpha-D-glucosamine: step 6/6. Transfers the gamma-phosphate of ATP to the 4'-position of a tetraacyldisaccharide 1-phosphate intermediate (termed DS-1-P) to form tetraacyldisaccharide 1,4'-bis-phosphate (lipid IVA). The polypeptide is Tetraacyldisaccharide 4'-kinase (Legionella pneumophila (strain Corby)).